The sequence spans 406 residues: Phosphatidylinositol 5-phosphate 4-kinase type-2 alpha (406 aa).

An N-acetylalanine modification is found at Ala2. A Phosphothreonine modification is found at Thr3. Ser14 is modified (phosphoserine). The PIPK domain maps to 33–405; it reads ASDPLLSVLM…RFLDFIGHIL (373 aa). Residues 59-65 are required for interaction with PIP5K1A; the sequence is VMLMPDD. 2 positions are modified to N6-acetyllysine: Lys89 and Lys145. The segment at 288–329 is disordered; sequence QEEVECEENDGEEEGESDGTHPVGTPPDSPGNTLNSSPPLAP. The segment covering 289-304 has biased composition (acidic residues); it reads EEVECEENDGEEEGES.

In terms of assembly, homodimer. Interacts with PIP4K2B; the interaction may regulate localization to the nucleus. Probably interacts with PIP5K1A; the interaction inhibits PIP5K1A kinase activity. Post-translationally, phosphorylated in tyrosines. Phosphorylation is induced by light and increases kinase activity. In terms of tissue distribution, expressed ubiquitously, with high levels in the brain. Present in most tissues, except notably skeletal muscle and small intestine.

It localises to the cell membrane. The protein resides in the nucleus. It is found in the lysosome. The protein localises to the cytoplasm. Its subcellular location is the photoreceptor inner segment. It localises to the cell projection. The protein resides in the cilium. It is found in the photoreceptor outer segment. It carries out the reaction a 1,2-diacyl-sn-glycero-3-phospho-(1D-myo-inositol-5-phosphate) + ATP = a 1,2-diacyl-sn-glycero-3-phospho-(1D-myo-inositol-4,5-bisphosphate) + ADP + H(+). The enzyme catalyses 1,2-dihexadecanoyl-sn-glycero-3-phospho-(1D-myo-inositol-5-phosphate) + ATP = 1,2-dihexadecanoyl-sn-glycero-3-phospho-(1D-myo-inositol-4,5-bisphosphate) + ADP + H(+). The catalysed reaction is 1,2-dihexadecanoyl-sn-glycero-3-phospho-(1D-myo-inositol-5-phosphate) + GTP = 1,2-dihexadecanoyl-sn-glycero-3-phospho-(1D-myo-inositol-4,5-bisphosphate) + GDP + H(+). With respect to regulation, in rod outer segments, activated by light. Inhibited by I-OMe tyrphostin AG-538 (I-OMe-AG-538), acting as an ATP-competitive inhibitor. Functionally, catalyzes the phosphorylation of phosphatidylinositol 5-phosphate (PtdIns5P) on the fourth hydroxyl of the myo-inositol ring, to form phosphatidylinositol 4,5-bisphosphate (PtdIns(4,5)P2). Has both ATP- and GTP-dependent kinase activities. May exert its function by regulating the levels of PtdIns5P, which functions in the cytosol by increasing AKT activity and in the nucleus signals through ING2. May regulate the pool of cytosolic PtdIns5P in response to the activation of tyrosine phosphorylation. Required for lysosome-peroxisome membrane contacts and intracellular cholesterol transport through modulating peroxisomal PtdIns(4,5)P2 level. In collaboration with PIP4K2B, has a role in mediating autophagy in times of nutrient stress. Required for autophagosome-lysosome fusion and the regulation of cellular lipid metabolism. May be involved in thrombopoiesis, and the terminal maturation of megakaryocytes and regulation of their size. Negatively regulates insulin signaling through a catalytic-independent mechanism. PIP4Ks interact with PIP5Ks and suppress PIP5K-mediated PtdIns(4,5)P2 synthesis and insulin-dependent conversion to PtdIns(3,4,5)P3. This chain is Phosphatidylinositol 5-phosphate 4-kinase type-2 alpha, found in Homo sapiens (Human).